The following is a 493-amino-acid chain: Amidophosphoribosyltransferase (493 aa).

Residues 1–26 (MIPTQPLTADLDCDLGLERPDRPEEA) constitute a propeptide that is removed on maturation. The active-site Nucleophile is C27. The 226-residue stretch at 27-252 (CGVFALYAPG…PGEMVRITDA (226 aa)) folds into the Glutamine amidotransferase type-2 domain. C268 provides a ligand contact to [4Fe-4S] cluster. S315, D377, and D378 together coordinate Mg(2+). [4Fe-4S] cluster is bound by residues C414, C465, and C468.

In the C-terminal section; belongs to the purine/pyrimidine phosphoribosyltransferase family. Mg(2+) serves as cofactor. The cofactor is [4Fe-4S] cluster.

It catalyses the reaction 5-phospho-beta-D-ribosylamine + L-glutamate + diphosphate = 5-phospho-alpha-D-ribose 1-diphosphate + L-glutamine + H2O. The protein operates within purine metabolism; IMP biosynthesis via de novo pathway; N(1)-(5-phospho-D-ribosyl)glycinamide from 5-phospho-alpha-D-ribose 1-diphosphate: step 1/2. Functionally, catalyzes the formation of phosphoribosylamine from phosphoribosylpyrophosphate (PRPP) and glutamine. This Synechococcus elongatus (strain ATCC 33912 / PCC 7942 / FACHB-805) (Anacystis nidulans R2) protein is Amidophosphoribosyltransferase.